A 584-amino-acid polypeptide reads, in one-letter code: Isocitrate dehydrogenase kinase/phosphatase (584 aa).

ATP contacts are provided by residues 315–321 (APGVKGM) and Lys336. Asp371 is a catalytic residue.

The protein belongs to the AceK family.

It localises to the cytoplasm. It carries out the reaction L-seryl-[isocitrate dehydrogenase] + ATP = O-phospho-L-seryl-[isocitrate dehydrogenase] + ADP + H(+). Bifunctional enzyme which can phosphorylate or dephosphorylate isocitrate dehydrogenase (IDH) on a specific serine residue. This is a regulatory mechanism which enables bacteria to bypass the Krebs cycle via the glyoxylate shunt in response to the source of carbon. When bacteria are grown on glucose, IDH is fully active and unphosphorylated, but when grown on acetate or ethanol, the activity of IDH declines drastically concomitant with its phosphorylation. The polypeptide is Isocitrate dehydrogenase kinase/phosphatase (Serratia proteamaculans (strain 568)).